Consider the following 533-residue polypeptide: MADTIPHNTFDTILVLDFGSQYTHLITRRLREINVYSEMLPCTQKLADLGWKPKGIILSGGPYSVYEEGAPHADPAFFELGVPILGICYGLQELAHRLHADNVVAGTAREYGHADLKATKFGGHVDKLFENIEGDMTVWMSHGDKLRNLPEGFHTIGTTQNSEYAAIAHKSDPIYGIQFHPEVTHTPQGGQLLKNFAVGICGAEQKWTMAEFIGQEIQRIRSLVGPDGQVLGAVSGGVDSTVAAKLMTEAIGDRFHAVLVDNGCMRLNECEKVQEVLQEQLGINLTVVDAGEQFLAGLKGVHDPEQKRKFIGGKFIDVFEDEARKIEAKSNGKVEWFLQGTLYPDVIESISFKGPSQTIKTHHNVGGIAERLMRGHGLKLIEPLRELFKDEVRELGRQLGISPELVGRHPFPGPGIAIRVLGEVTREKVEMARQADHIFISMIREAGIYDEIGQAYAALDPSRAVGVMGDKRVYANIILLRAISTKDFMTATPYPFSYEFLSKVSTRIVNEVAGVCRVCYDYTSKPPGTIEME.

One can recognise a Glutamine amidotransferase type-1 domain in the interval 12-206; it reads TILVLDFGSQ…AVGICGAEQK (195 aa). The active-site Nucleophile is C88. Residues H180 and E182 contribute to the active site. The GMPS ATP-PPase domain maps to 207 to 408; the sequence is WTMAEFIGQE…LGISPELVGR (202 aa). Residue 235–241 coordinates ATP; the sequence is SGGVDST. XMP is bound by residues R308, D470, K525, and E531.

As to quaternary structure, homodimer. The cofactor is Mg(2+).

Its subcellular location is the cytoplasm. It localises to the cytosol. It catalyses the reaction XMP + L-glutamine + ATP + H2O = GMP + L-glutamate + AMP + diphosphate + 2 H(+). The protein operates within purine metabolism; GMP biosynthesis; GMP from XMP (L-Gln route): step 1/1. Its function is as follows. Catalyzes the conversion of xanthine monophosphate (XMP) to GMP in the presence of glutamine and ATP through an adenyl-XMP intermediate. The polypeptide is GMP synthase [glutamine-hydrolyzing] (gua1) (Emericella nidulans (strain FGSC A4 / ATCC 38163 / CBS 112.46 / NRRL 194 / M139) (Aspergillus nidulans)).